The chain runs to 238 residues: Ribonuclease PH (238 aa).

A disordered region spans residues 67-87 (PRSTHTRSDREAARGKQSGRT). Residues R86 and 124–126 (GTR) contribute to the phosphate site.

The protein belongs to the RNase PH family. As to quaternary structure, homohexameric ring arranged as a trimer of dimers.

The enzyme catalyses tRNA(n+1) + phosphate = tRNA(n) + a ribonucleoside 5'-diphosphate. Phosphorolytic 3'-5' exoribonuclease that plays an important role in tRNA 3'-end maturation. Removes nucleotide residues following the 3'-CCA terminus of tRNAs; can also add nucleotides to the ends of RNA molecules by using nucleoside diphosphates as substrates, but this may not be physiologically important. Probably plays a role in initiation of 16S rRNA degradation (leading to ribosome degradation) during starvation. The protein is Ribonuclease PH of Ralstonia nicotianae (strain ATCC BAA-1114 / GMI1000) (Ralstonia solanacearum).